Consider the following 418-residue polypeptide: UDP-N-acetylglucosamine 1-carboxyvinyltransferase (418 aa).

A phosphoenolpyruvate-binding site is contributed by 22 to 23 (KN). UDP-N-acetyl-alpha-D-glucosamine is bound at residue R92. Residue C116 is the Proton donor of the active site. At C116 the chain carries 2-(S-cysteinyl)pyruvic acid O-phosphothioketal. Residues 121 to 125 (RPIDL), D305, and L327 contribute to the UDP-N-acetyl-alpha-D-glucosamine site.

This sequence belongs to the EPSP synthase family. MurA subfamily.

It localises to the cytoplasm. It carries out the reaction phosphoenolpyruvate + UDP-N-acetyl-alpha-D-glucosamine = UDP-N-acetyl-3-O-(1-carboxyvinyl)-alpha-D-glucosamine + phosphate. It participates in cell wall biogenesis; peptidoglycan biosynthesis. Cell wall formation. Adds enolpyruvyl to UDP-N-acetylglucosamine. The protein is UDP-N-acetylglucosamine 1-carboxyvinyltransferase of Campylobacter jejuni (strain RM1221).